Reading from the N-terminus, the 384-residue chain is D-galactosamine-6-phosphate deaminase AgaS (384 aa).

SIS domains are found at residues 45–197 (LEPL…SQTF) and 215–364 (SEGV…PDTP).

It belongs to the SIS family. AgaS subfamily.

It carries out the reaction D-galactosamine 6-phosphate + H2O = D-tagatopyranose 1-phosphate + NH4(+). In terms of biological role, catalyzes the isomerization-deamination of galactosamine 6-phosphate to form tagatofuranose 6-phosphate and ammonium ion. This chain is D-galactosamine-6-phosphate deaminase AgaS, found in Escherichia coli.